A 341-amino-acid polypeptide reads, in one-letter code: Tetraacyldisaccharide 4'-kinase (341 aa).

An ATP-binding site is contributed by 54–61; sequence TVGGAGKT.

This sequence belongs to the LpxK family.

The enzyme catalyses a lipid A disaccharide + ATP = a lipid IVA + ADP + H(+). The protein operates within glycolipid biosynthesis; lipid IV(A) biosynthesis; lipid IV(A) from (3R)-3-hydroxytetradecanoyl-[acyl-carrier-protein] and UDP-N-acetyl-alpha-D-glucosamine: step 6/6. Transfers the gamma-phosphate of ATP to the 4'-position of a tetraacyldisaccharide 1-phosphate intermediate (termed DS-1-P) to form tetraacyldisaccharide 1,4'-bis-phosphate (lipid IVA). The protein is Tetraacyldisaccharide 4'-kinase of Brucella suis (strain ATCC 23445 / NCTC 10510).